A 563-amino-acid polypeptide reads, in one-letter code: Putative cysteine ligase BshC (563 aa).

The protein belongs to the BshC family.

The polypeptide is Putative cysteine ligase BshC (Chlorobium phaeobacteroides (strain BS1)).